A 566-amino-acid polypeptide reads, in one-letter code: Proline--tRNA ligase (566 aa).

It belongs to the class-II aminoacyl-tRNA synthetase family. ProS type 1 subfamily. In terms of assembly, homodimer.

It localises to the cytoplasm. It catalyses the reaction tRNA(Pro) + L-proline + ATP = L-prolyl-tRNA(Pro) + AMP + diphosphate. Functionally, catalyzes the attachment of proline to tRNA(Pro) in a two-step reaction: proline is first activated by ATP to form Pro-AMP and then transferred to the acceptor end of tRNA(Pro). As ProRS can inadvertently accommodate and process non-cognate amino acids such as alanine and cysteine, to avoid such errors it has two additional distinct editing activities against alanine. One activity is designated as 'pretransfer' editing and involves the tRNA(Pro)-independent hydrolysis of activated Ala-AMP. The other activity is designated 'posttransfer' editing and involves deacylation of mischarged Ala-tRNA(Pro). The misacylated Cys-tRNA(Pro) is not edited by ProRS. The chain is Proline--tRNA ligase from Coxiella burnetii (strain RSA 493 / Nine Mile phase I).